We begin with the raw amino-acid sequence, 141 residues long: uncharacterized protein (141 aa).

The next 2 membrane-spanning stretches (helical) occupy residues 64–84 and 112–132; these read IAAVGLAVSGPGVLYKVIEAI and IVGSGAAFVTALGVAAFLVLI.

Its subcellular location is the cell membrane. This is an uncharacterized protein from Sinorhizobium fredii (strain NBRC 101917 / NGR234).